A 385-amino-acid polypeptide reads, in one-letter code: Cytochrome b (385 aa).

The next 4 helical transmembrane spans lie at Phe-32 to Met-52, Trp-76 to Gly-98, Thr-113 to Val-133, and Phe-179 to Ile-199. The heme b site is built by His-82 and His-96. Heme b contacts are provided by His-183 and His-197. His-202 provides a ligand contact to a ubiquinone. 4 helical membrane-spanning segments follow: residues Phe-226–Phe-246, Leu-290–Asp-310, Leu-322–Ala-342, and Phe-349–Pro-369.

The protein belongs to the cytochrome b family. In terms of assembly, fungal cytochrome b-c1 complex contains 10 subunits; 3 respiratory subunits, 2 core proteins and 5 low-molecular weight proteins. Cytochrome b-c1 complex is a homodimer. The cofactor is heme b.

It is found in the mitochondrion inner membrane. Functionally, component of the ubiquinol-cytochrome c reductase complex (complex III or cytochrome b-c1 complex) that is part of the mitochondrial respiratory chain. The b-c1 complex mediates electron transfer from ubiquinol to cytochrome c. Contributes to the generation of a proton gradient across the mitochondrial membrane that is then used for ATP synthesis. The protein is Cytochrome b (cob) of Aspergillus tubingensis.